Reading from the N-terminus, the 241-residue chain is Glutathione S-transferase theta-3 (241 aa).

In terms of domain architecture, GST N-terminal spans 2–82; sequence GLELYLDLMS…YLSRKYKAPD (81 aa). Glutathione contacts are provided by residues 53–54 and 66–67; these read KV and ES. Residues 88-222 form the GST C-terminal domain; the sequence is DLQTRARVDE…VVLKAKDMPP (135 aa).

It belongs to the GST superfamily. Theta family. Homodimer. Expressed strongly in liver, and at lower levels in kidney and testis.

The protein localises to the cytoplasm. It catalyses the reaction RX + glutathione = an S-substituted glutathione + a halide anion + H(+). In terms of biological role, conjugation of reduced glutathione to a wide number of exogenous and endogenous hydrophobic electrophiles. Shows high activity towards 4-nitrobenzyl chloride (4-NBC). Also has lower activity towards 1,2-epoxy-3-(p-nitrophenoxy)propane (EPNP), cumene hydroperoxide, 1-chloro-2,4-dinitrobenzene (CDNB), 7-chloro-4-nitrobenzo-2-oxa-1,3-diazole (NBD-Cl), and ethacrynic acid. The chain is Glutathione S-transferase theta-3 from Mus musculus (Mouse).